The chain runs to 468 residues: RuvB-like helicase 2 (468 aa).

Position 76–83 (76–83) interacts with ATP; it reads GPPSTGKT.

It belongs to the RuvB family. May form heterododecamers with RVB1. Component of the SWR1 chromatin remodeling complex, the INO80 chromatin remodeling complex, and of the R2TP complex.

It is found in the nucleus. It carries out the reaction ATP + H2O = ADP + phosphate + H(+). Functionally, DNA helicase which participates in several chromatin remodeling complexes, including the SWR1 and the INO80 complexes. The SWR1 complex mediates the ATP-dependent exchange of histone H2A for the H2A variant HZT1 leading to transcriptional regulation of selected genes by chromatin remodeling. The INO80 complex remodels chromatin by shifting nucleosomes and is involved in DNA repair. Also involved in pre-rRNA processing. In Emericella nidulans (strain FGSC A4 / ATCC 38163 / CBS 112.46 / NRRL 194 / M139) (Aspergillus nidulans), this protein is RuvB-like helicase 2 (rvb2).